The chain runs to 130 residues: Protein ApaG (130 aa).

The ApaG domain maps to Arg3–Arg127.

This chain is Protein ApaG, found in Azorhizobium caulinodans (strain ATCC 43989 / DSM 5975 / JCM 20966 / LMG 6465 / NBRC 14845 / NCIMB 13405 / ORS 571).